The primary structure comprises 106 residues: Protein Rev (106 aa).

Positions 8-16 are homomultimerization; that stretch reads VIKFLYQSN. The disordered stretch occupies residues 13–36; sequence YQSNPPPRPEGTRQARRNRRRRWR. The Nuclear localization signal and RNA-binding (RRE) motif lies at 24–40; that stretch reads TRQARRNRRRRWRARQR. Residues 26–36 are compositionally biased toward basic residues; the sequence is QARRNRRRRWR. The short motif at 63-74 is the Nuclear export signal and binding to XPO1 element; it reads LQLPPLERLTLD. Ser-82 and Ser-89 each carry phosphoserine; by host.

Belongs to the HIV-1 REV protein family. As to quaternary structure, homomultimer; when bound to the RRE. Multimeric assembly is essential for activity and may involve XPO1. Binds to human KPNB1, XPO1, TNPO1, RANBP5 and IPO7. Interacts with the viral Integrase. Interacts with human KHDRBS1. Interacts with human NAP1; this interaction decreases Rev multimerization and stimulates its activity. Interacts with human DEAD-box helicases DDX3 and DDX24; these interactions may serve for viral RNA export to the cytoplasm and packaging, respectively. Interacts with human PSIP1; this interaction may inhibit HIV-1 DNA integration by promoting dissociation of the Integrase-LEDGF/p75 complex. Post-translationally, asymmetrically arginine dimethylated at one site by host PRMT6. Methylation impairs the RNA-binding activity and export of viral RNA from the nucleus to the cytoplasm. Phosphorylated by protein kinase CK2. Presence of, and maybe binding to the N-terminus of the regulatory beta subunit of CK2 is necessary for CK2-mediated Rev's phosphorylation.

It localises to the host nucleus. The protein resides in the host nucleolus. The protein localises to the host cytoplasm. Its function is as follows. Escorts unspliced or incompletely spliced viral pre-mRNAs (late transcripts) out of the nucleus of infected cells. These pre-mRNAs carry a recognition sequence called Rev responsive element (RRE) located in the env gene, that is not present in fully spliced viral mRNAs (early transcripts). This function is essential since most viral proteins are translated from unspliced or partially spliced pre-mRNAs which cannot exit the nucleus by the pathway used by fully processed cellular mRNAs. Rev itself is translated from a fully spliced mRNA that readily exits the nucleus. Rev's nuclear localization signal (NLS) binds directly to KPNB1/Importin beta-1 without previous binding to KPNA1/Importin alpha-1. KPNB1 binds to the GDP bound form of RAN (Ran-GDP) and targets Rev to the nucleus. In the nucleus, the conversion from Ran-GDP to Ran-GTP dissociates Rev from KPNB1 and allows Rev's binding to the RRE in viral pre-mRNAs. Rev multimerization on the RRE via cooperative assembly exposes its nuclear export signal (NES) to the surface. Rev can then form a complex with XPO1/CRM1 and Ran-GTP, leading to nuclear export of the complex. Conversion from Ran-GTP to Ran-GDP mediates dissociation of the Rev/RRE/XPO1/RAN complex, so that Rev can return to the nucleus for a subsequent round of export. Beside KPNB1, also seems to interact with TNPO1/Transportin-1, RANBP5/IPO5 and IPO7/RANBP7 for nuclear import. The nucleoporin-like HRB/RIP is an essential cofactor that probably indirectly interacts with Rev to release HIV RNAs from the perinuclear region to the cytoplasm. The chain is Protein Rev from Homo sapiens (Human).